The following is a 305-amino-acid chain: UDP-3-O-acyl-N-acetylglucosamine deacetylase (305 aa).

Positions 78, 237, and 241 each coordinate Zn(2+). The active-site Proton donor is H264.

Belongs to the LpxC family. The cofactor is Zn(2+).

The catalysed reaction is a UDP-3-O-[(3R)-3-hydroxyacyl]-N-acetyl-alpha-D-glucosamine + H2O = a UDP-3-O-[(3R)-3-hydroxyacyl]-alpha-D-glucosamine + acetate. It participates in glycolipid biosynthesis; lipid IV(A) biosynthesis; lipid IV(A) from (3R)-3-hydroxytetradecanoyl-[acyl-carrier-protein] and UDP-N-acetyl-alpha-D-glucosamine: step 2/6. Catalyzes the hydrolysis of UDP-3-O-myristoyl-N-acetylglucosamine to form UDP-3-O-myristoylglucosamine and acetate, the committed step in lipid A biosynthesis. The chain is UDP-3-O-acyl-N-acetylglucosamine deacetylase from Burkholderia ambifaria (strain ATCC BAA-244 / DSM 16087 / CCUG 44356 / LMG 19182 / AMMD) (Burkholderia cepacia (strain AMMD)).